The chain runs to 196 residues: Nucleoside triphosphate pyrophosphatase (196 aa).

Asp73 functions as the Proton acceptor in the catalytic mechanism.

It belongs to the Maf family. It depends on a divalent metal cation as a cofactor.

The protein resides in the cytoplasm. The catalysed reaction is a ribonucleoside 5'-triphosphate + H2O = a ribonucleoside 5'-phosphate + diphosphate + H(+). The enzyme catalyses a 2'-deoxyribonucleoside 5'-triphosphate + H2O = a 2'-deoxyribonucleoside 5'-phosphate + diphosphate + H(+). Its function is as follows. Nucleoside triphosphate pyrophosphatase. May have a dual role in cell division arrest and in preventing the incorporation of modified nucleotides into cellular nucleic acids. The sequence is that of Nucleoside triphosphate pyrophosphatase from Anaplasma marginale (strain St. Maries).